The sequence spans 88 residues: Small ribosomal subunit protein bS20 (88 aa).

Disordered stretches follow at residues 1–23 (MANT…VNKA) and 65–88 (GVMH…SLSA).

It belongs to the bacterial ribosomal protein bS20 family.

Its function is as follows. Binds directly to 16S ribosomal RNA. The protein is Small ribosomal subunit protein bS20 of Rhizobium meliloti (strain 1021) (Ensifer meliloti).